The chain runs to 874 residues: Alanine--tRNA ligase (874 aa).

The Zn(2+) site is built by histidine 562, histidine 566, cysteine 664, and histidine 668.

It belongs to the class-II aminoacyl-tRNA synthetase family. The cofactor is Zn(2+).

Its subcellular location is the cytoplasm. It carries out the reaction tRNA(Ala) + L-alanine + ATP = L-alanyl-tRNA(Ala) + AMP + diphosphate. Its function is as follows. Catalyzes the attachment of alanine to tRNA(Ala) in a two-step reaction: alanine is first activated by ATP to form Ala-AMP and then transferred to the acceptor end of tRNA(Ala). Also edits incorrectly charged Ser-tRNA(Ala) and Gly-tRNA(Ala) via its editing domain. This chain is Alanine--tRNA ligase, found in Shewanella putrefaciens (strain CN-32 / ATCC BAA-453).